The sequence spans 437 residues: Aminopeptidase W (437 aa).

Catalysis depends on residues cysteine 70, histidine 361, and asparagine 382.

This sequence belongs to the peptidase C1 family.

It is found in the cytoplasm. The protein is Aminopeptidase W (pepW) of Lactobacillus delbrueckii subsp. lactis.